A 567-amino-acid chain; its full sequence is Geranylgeranyl transferase type-2 subunit alpha (567 aa).

PFTA repeat units lie at residues 44-78 (LDESVLELTSQILGANPDFATLWNCRREVLQQLET), 88-122 (LVKAELGFLESCLRVNPKSYGTWHHRCWLLSRLPE), 124-158 (NWARELELCARFLEADERNFHCWDYRRFVAAQAAV), 159-193 (APAEELAFTDSLITRNFSNYSSWHYRSCLLPQLHP), 207-241 (VLLRELELVQNAFFTDPNDQSAWFYHRWLLGRAEP), and 363-397 (VLQSELESCKELQELEPENKWCLLTIILLMRALDP). At S98 the chain carries Phosphoserine. LRR repeat units follow at residues 442–463 (DVRVLHLAHKDLTVLCHLEQLL), 464–486 (LVTHLDLSHNRLRALPPALAALR), 487–508 (CLEVLQASDNVLENLDGVANLP), 509–530 (RLRELLLCNNRLQQSAALQTLA), and 534–555 (RLVFLNLQGNSLCQEEGIRERL).

The protein belongs to the protein prenyltransferase subunit alpha family. In terms of assembly, heterotrimer composed of RABGGTA, RABGGTB and CHM; within this trimer, RABGGTA and RABGGTB form the catalytic component B, while CHM (component A) mediates peptide substrate binding. The Rab GGTase dimer (RGGT) interacts with CHM (component A) prior to Rab protein binding; the association is stabilized by geranylgeranyl pyrophosphate (GGpp). The CHM:RGGT:Rab complex is destabilized by GGpp. Interacts with non-phosphorylated form of RAB8A; phosphorylation of RAB8A at 'Thr-72' disrupts this interaction.

The enzyme catalyses geranylgeranyl diphosphate + L-cysteinyl-[protein] = S-geranylgeranyl-L-cysteinyl-[protein] + diphosphate. The enzymatic reaction requires the aid of a Rab escort protein (also called component A), such as CHM. Functionally, catalyzes the transfer of a geranylgeranyl moiety from geranylgeranyl diphosphate to both cysteines of Rab proteins with the C-terminal sequence -XXCC, -XCXC and -CCXX, such as RAB1A, RAB3A, RAB5A and RAB7A. The sequence is that of Geranylgeranyl transferase type-2 subunit alpha (Rabggta) from Mus musculus (Mouse).